We begin with the raw amino-acid sequence, 389 residues long: MMAIDKPLDFLWFIPSSGDGQYLGSDDLSRPADPGYFREIAKAADRLGYSGVLIPTGAACEESFILAADLAAHTERLKFLVAIRPGTASPAYYARLAATLDRVSNGRLLINIVVGGSAQELAGDGIFLPHDERYDHAGEFFQVFNSLVETGKANLDGKYIKAIDARLGLPPVQEPRPPLYFGGSSDAAIAFSGGITDKYLTWGEPPAQVAEKIAKVRKAAAAQGKHVTFGIRLHFIVRETDEEAWAAADRLISKLSDETIAAAQEVFAKSSDSVGQARMVALHQGRRDKLEVSPNLWAGIGLVRTGAGTALVGSPKTIAERLREYQALGIDTVIASGYPHLEEAYRVSELLFPEIGLPGPHGQIRSSFGERRVFGGGGHGGNVKIASAS.

It belongs to the SsuD family.

The enzyme catalyses an alkanesulfonate + FMNH2 + O2 = an aldehyde + FMN + sulfite + H2O + 2 H(+). Catalyzes the desulfonation of aliphatic sulfonates. The protein is Alkanesulfonate monooxygenase of Rhizobium etli (strain CIAT 652).